A 187-amino-acid polypeptide reads, in one-letter code: Intraflagellar transport protein 22 homolog (187 aa).

Residues 10-17 (GPSECGKT), 65-69 (DCAGD), and 125-128 (HKPG) each bind GTP.

Belongs to the small GTPase superfamily. Rab family.

The polypeptide is Intraflagellar transport protein 22 homolog (ift22) (Danio rerio (Zebrafish)).